A 169-amino-acid chain; its full sequence is Sulfopyruvate decarboxylase subunit alpha (169 aa).

It belongs to the ComD family. In terms of assembly, heterododecamer composed of 6 subunits alpha and 6 subunits beta.

It carries out the reaction 3-sulfopyruvate + H(+) = sulfoacetaldehyde + CO2. It participates in cofactor biosynthesis; coenzyme M biosynthesis; sulfoacetaldehyde from phosphoenolpyruvate and sulfite: step 4/4. Its activity is regulated as follows. Inhibited by oxygen when heated in air at 80 degrees Celsius. The enzyme is reactivated by addition of dithionite. Involved in the biosynthesis of the coenzyme M (2-mercaptoethanesulfonic acid). Catalyzes the decarboxylation of sulfopyruvate to sulfoacetaldehyde. The sequence is that of Sulfopyruvate decarboxylase subunit alpha from Methanocaldococcus jannaschii (strain ATCC 43067 / DSM 2661 / JAL-1 / JCM 10045 / NBRC 100440) (Methanococcus jannaschii).